We begin with the raw amino-acid sequence, 244 residues long: MFKAELNDPNILRTSFDAISSIVDEVQIQLSAEGLRLDALDRSHITYVHLELKAELFDEYVCDEPERINVDTEELMKVLKRAKANDRVILSTDEGNLIIQFEGEAVRTFKIRLIDIEYETPSPPEIEYENEFEVPFQLLKDSIADIDIFSDKITFRVDEDRFIASAEGEFGDAQIEYLHGERIDKPARSIYSLDKIKEMLKADKFSETAIINLGDDMPLKLTLKMASKEGELSFLLAPRIEAEE.

It belongs to the PCNA family. In terms of assembly, homotrimer. The subunits circularize to form a toroid; DNA passes through its center. Replication factor C (RFC) is required to load the toroid on the DNA.

Sliding clamp subunit that acts as a moving platform for DNA processing. Responsible for tethering the catalytic subunit of DNA polymerase to DNA during high-speed replication. In conjunction with replication factor C (RFC) stimulates DNA synthesis by PolB, relieving inhibition by replication protein A (RPA). The protein is DNA polymerase sliding clamp of Methanothermobacter thermautotrophicus (strain ATCC 29096 / DSM 1053 / JCM 10044 / NBRC 100330 / Delta H) (Methanobacterium thermoautotrophicum).